Consider the following 173-residue polypeptide: Probable WRKY transcription factor 50 (173 aa).

Residues 107 to 172 (SEVEVLDDGF…YEGSHNHSSM (66 aa)) constitute a DNA-binding region (WRKY).

This sequence belongs to the WRKY group II-c family.

It localises to the nucleus. Its function is as follows. Transcription factor. Interacts specifically with the W box (5'-(T)TGAC[CT]-3'), a frequently occurring elicitor-responsive cis-acting element. The protein is Probable WRKY transcription factor 50 (WRKY50) of Arabidopsis thaliana (Mouse-ear cress).